The following is a 64-amino-acid chain: Large ribosomal subunit protein bL35 (64 aa).

The disordered stretch occupies residues 22–44 (IMKQQAGMRHNLEVKSSKRKARL).

The protein belongs to the bacterial ribosomal protein bL35 family.

The chain is Large ribosomal subunit protein bL35 from Clavibacter sepedonicus (Clavibacter michiganensis subsp. sepedonicus).